Consider the following 463-residue polypeptide: Pentatricopeptide repeat-containing protein At2g17670 (463 aa).

The disordered stretch occupies residues 1–63; the sequence is MGKVPSSFRS…PSLRNPFKSP (63 aa). 9 PPR repeats span residues 121–157, 158–192, 193–223, 229–263, 264–298, 299–333, 334–368, 369–403, and 404–438; these read GRSTFLILLSHACRAPDSSISNVHRVLNLMVNNGLEP, DQVTTDIAVRSLCETGRVDEAKDLMKELTEKHSPP, DTYTYNFLLKHLCKCKDLHVVYEFVDEMRDD, DLVSFTILIDNVCNSKNLREAMYLVSKLGNAGFKP, DCFLYNTIMKGFCTLSKGSEAVGVYKKMKEEGVEP, DQITYNTLIFGLSKAGRVEEARMYLKTMVDAGYEP, DTATYTSLMNGMCRKGESLGALSLLEEMEARGCAP, NDCTYNTLLHGLCKARLMDKGMELYEMMKSSGVKL, and ESNGYATLVRSLVKSGKVAEAYEVFDYAVDSKSLS.

The protein belongs to the PPR family. P subfamily.

This is Pentatricopeptide repeat-containing protein At2g17670 from Arabidopsis thaliana (Mouse-ear cress).